The following is a 114-amino-acid chain: NLP effector protein 1 (114 aa).

The protein belongs to the Necrosis inducing protein (NPP1) family.

It localises to the secreted. Its subcellular location is the host cytoplasm. Probable secreted effector that may act as a pathogen-associated molecular pattern (PAMP) recognized by the plant immune system. Seems not to induce necrosis, neither in several susceptible or resistant Vitis species nor in the dicot model plant Nicotiana benthamiana. In Plasmopara viticola (Downy mildew of grapevine), this protein is NLP effector protein 1.